The chain runs to 963 residues: Collagen alpha-1(I) chain (963 aa).

The disordered stretch occupies residues 1–963 (GPMGPSGPRG…PGPPGPPGPP (963 aa)). Over residues 40–54 (NGDDGEAGKPGRPGE) the composition is skewed to basic and acidic residues. Residue Ser82 is modified to Phosphoserine. Composition is skewed to low complexity over residues 90-106 (DAGP…PGEN) and 129-142 (PAGA…TGAA). Residues 144–156 (PPGPTGPAGPPGF) are compositionally biased toward pro residues. Residues 190–229 (AGAAGPAGNPGADGQPGAKGANGAPGIAGAPGFPGARGPS) are compositionally biased toward low complexity. Gly residues predominate over residues 296 to 305 (GERGGPGARG). Composition is skewed to low complexity over residues 313–337 (AGPK…PGEA), 349–375 (KGIT…QDGR), 384–403 (ARGQ…AGEP), 482–495 (PRGA…DGAK), 555–569 (SGPS…ARGA), and 582–609 (AGFA…KGDA). At Ser558 the chain carries Phosphoserine. Over residues 611-623 (PPGPAGPTGPPGP) the composition is skewed to pro residues. Composition is skewed to low complexity over residues 638–654 (SAGP…AGRV), 683–692 (ETGPAGRPGE), and 702–726 (AGEK…QGIA). Composition is skewed to pro residues over residues 767–777 (PPGPVGPPGIA) and 813–828 (AGPP…PGPV). Low complexity predominate over residues 849-863 (IGPVGARGPAGPQGP). Basic and acidic residues predominate over residues 864-878 (RGDKGETGEQGDRGI). Low complexity predominate over residues 897–930 (PGEQGPSGASGPAGPRGPPGSAGAPGKDGINGIP). The segment covering 948–963 (VGPPGPPGPPGPPGPP) has biased composition (pro residues).

Belongs to the fibrillar collagen family. In terms of assembly, trimers of one alpha 2(I) and two alpha 1(I) chains. In terms of processing, prolines at the third position of the tripeptide repeating unit (G-X-Y) are hydroxylated in some or all of the chains. In terms of tissue distribution, forms the fibrils of tendon, ligaments and bones. In bones, the fibrils are mineralized with calcium hydroxyapatite.

It localises to the secreted. The protein resides in the extracellular space. The protein localises to the extracellular matrix. Its function is as follows. Type I collagen is a member of group I collagen (fibrillar forming collagen). The protein is Collagen alpha-1(I) chain of Tapirus terrestris (Lowland tapir).